Here is a 644-residue protein sequence, read N- to C-terminus: Protein DA1-related 6 (644 aa).

3 consecutive UIM domains span residues 119-138 (EEDELLARTLEESLKENNRR), 181-200 (DVDEQFAKAVKESLKNKGKG), and 244-263 (DEDEQLAKAVEESLKGKGQI). The region spanning 284-355 (SLCGGCNFAV…YVCKEKKMKT (72 aa)) is the LIM zinc-binding domain. Low complexity predominate over residues 572 to 589 (ASSSASSSSRTPPAASAS). The tract at residues 572-591 (ASSSASSSSRTPPAASASKK) is disordered.

As to quaternary structure, interacts with ubiquitin.

Ubiquitin receptor that probably regulates developmental process. The chain is Protein DA1-related 6 (DAR6) from Arabidopsis thaliana (Mouse-ear cress).